Here is a 194-residue protein sequence, read N- to C-terminus: uncharacterized protein (194 aa).

A signal peptide spans 1–24 (MRKFVAFFVIVALAALLAGCGGQG).

This is an uncharacterized protein from Archaeoglobus fulgidus (strain ATCC 49558 / DSM 4304 / JCM 9628 / NBRC 100126 / VC-16).